Consider the following 344-residue polypeptide: tRNA N6-adenosine threonylcarbamoyltransferase (344 aa).

His112 and His116 together coordinate Fe cation. Residues 134 to 138 (LASGG), Asp167, Gly180, and Asn280 contribute to the substrate site. Residue Asp308 coordinates Fe cation.

The protein belongs to the KAE1 / TsaD family. Fe(2+) is required as a cofactor.

The protein localises to the cytoplasm. It catalyses the reaction L-threonylcarbamoyladenylate + adenosine(37) in tRNA = N(6)-L-threonylcarbamoyladenosine(37) in tRNA + AMP + H(+). In terms of biological role, required for the formation of a threonylcarbamoyl group on adenosine at position 37 (t(6)A37) in tRNAs that read codons beginning with adenine. Is involved in the transfer of the threonylcarbamoyl moiety of threonylcarbamoyl-AMP (TC-AMP) to the N6 group of A37, together with TsaE and TsaB. TsaD likely plays a direct catalytic role in this reaction. This chain is tRNA N6-adenosine threonylcarbamoyltransferase, found in Rickettsia peacockii (strain Rustic).